Here is a 513-residue protein sequence, read N- to C-terminus: MQLNSTEIAELIKKRIEQFNVSSEARNEGTIVAVTDGIIRIHGLADVMQGEMIELPGSRYAIALNLERDSVGAVVMGPYADLKEGDKVQSTGRILEVPVGNALLGRVVNTLGEPIDGKGAIDAAGFEPVEKIAPGVIERQSVDQPVQTGYKSVDAMIPVGRGQRELIIGDRQCGKTAMAVDAIINQKGTGIKCVYVAVGQKASTIANVVRKLEEHGALDHTIVVAASASESAALQYLAPYSGCTMGEYFRDRGEDALIVYDDLSKQAVAYRQISLLLKRPPGREAYPGDVFYLHSRLLERAARVNEQYVENYTNGEVKGKTGSLTALPIIETQAGDVSAFVPTNVISITDGQIFLETDLFNAGIRPAVNAGISVSRVGGAAQTKIIKKLGGGIRLALAQYRELAAFSQFASDLDDATREQLEHGERVTELMKQKQYAPLSIANMGVSLFAVEKGFLKGIELNKILDFEAALHSYMNSEHADLMKTINESGNYNDEIASKLNDALTNFKATQTW.

Residue 169–176 participates in ATP binding; sequence GDRQCGKT.

Belongs to the ATPase alpha/beta chains family. F-type ATPases have 2 components, CF(1) - the catalytic core - and CF(0) - the membrane proton channel. CF(1) has five subunits: alpha(3), beta(3), gamma(1), delta(1), epsilon(1). CF(0) has three main subunits: a(1), b(2) and c(9-12). The alpha and beta chains form an alternating ring which encloses part of the gamma chain. CF(1) is attached to CF(0) by a central stalk formed by the gamma and epsilon chains, while a peripheral stalk is formed by the delta and b chains.

It is found in the cell inner membrane. It carries out the reaction ATP + H2O + 4 H(+)(in) = ADP + phosphate + 5 H(+)(out). Produces ATP from ADP in the presence of a proton gradient across the membrane. The alpha chain is a regulatory subunit. This chain is ATP synthase subunit alpha, found in Alteromonas mediterranea (strain DSM 17117 / CIP 110805 / LMG 28347 / Deep ecotype).